The chain runs to 358 residues: Fructose-bisphosphate aldolase class 2 (358 aa).

S61 lines the D-glyceraldehyde 3-phosphate pocket. D109 functions as the Proton donor in the catalytic mechanism. 4 residues coordinate Zn(2+): H110, D144, E174, and H226. G227 contacts dihydroxyacetone phosphate. H264 is a binding site for Zn(2+). Dihydroxyacetone phosphate contacts are provided by residues 265-267 (GGS) and 286-289 (NIDT).

The protein belongs to the class II fructose-bisphosphate aldolase family. It depends on Zn(2+) as a cofactor.

The enzyme catalyses beta-D-fructose 1,6-bisphosphate = D-glyceraldehyde 3-phosphate + dihydroxyacetone phosphate. It functions in the pathway carbohydrate degradation; glycolysis; D-glyceraldehyde 3-phosphate and glycerone phosphate from D-glucose: step 4/4. Functionally, catalyzes the aldol condensation of dihydroxyacetone phosphate (DHAP or glycerone-phosphate) with glyceraldehyde 3-phosphate (G3P) to form fructose 1,6-bisphosphate (FBP) in gluconeogenesis and the reverse reaction in glycolysis. The chain is Fructose-bisphosphate aldolase class 2 (fbaA) from Buchnera aphidicola subsp. Acyrthosiphon pisum (strain APS) (Acyrthosiphon pisum symbiotic bacterium).